Here is a 450-residue protein sequence, read N- to C-terminus: uncharacterized protein (450 aa).

Belongs to the heat shock protein 70 family.

This is an uncharacterized protein from Escherichia coli (strain K12).